Reading from the N-terminus, the 231-residue chain is Small ribosomal subunit protein uS3 (231 aa).

Residues 39–107 (IRKFIKEKLF…QVSVNIVEIK (69 aa)) enclose the KH type-2 domain.

It belongs to the universal ribosomal protein uS3 family. Part of the 30S ribosomal subunit. Forms a tight complex with proteins S10 and S14.

Functionally, binds the lower part of the 30S subunit head. Binds mRNA in the 70S ribosome, positioning it for translation. The chain is Small ribosomal subunit protein uS3 from Pelotomaculum thermopropionicum (strain DSM 13744 / JCM 10971 / SI).